The chain runs to 140 residues: 3-hydroxyacyl-[acyl-carrier-protein] dehydratase FabZ (140 aa).

His-47 is an active-site residue.

Belongs to the thioester dehydratase family. FabZ subfamily.

The protein localises to the cytoplasm. The enzyme catalyses a (3R)-hydroxyacyl-[ACP] = a (2E)-enoyl-[ACP] + H2O. In terms of biological role, involved in unsaturated fatty acids biosynthesis. Catalyzes the dehydration of short chain beta-hydroxyacyl-ACPs and long chain saturated and unsaturated beta-hydroxyacyl-ACPs. This Streptococcus suis (strain 98HAH33) protein is 3-hydroxyacyl-[acyl-carrier-protein] dehydratase FabZ.